The chain runs to 384 residues: Dual-specificity RNA methyltransferase RlmN (384 aa).

The active-site Proton acceptor is the Glu105. In terms of domain architecture, Radical SAM core spans 111–350 (EDDRATLCVS…TIVRKTRGDD (240 aa)). Cys118 and Cys355 are joined by a disulfide. Residues Cys125, Cys129, and Cys132 each coordinate [4Fe-4S] cluster. Residues 179–180 (GE), Ser211, 233–235 (SLH), and Asn312 contribute to the S-adenosyl-L-methionine site. Catalysis depends on Cys355, which acts as the S-methylcysteine intermediate.

The protein belongs to the radical SAM superfamily. RlmN family. It depends on [4Fe-4S] cluster as a cofactor.

The protein resides in the cytoplasm. The catalysed reaction is adenosine(2503) in 23S rRNA + 2 reduced [2Fe-2S]-[ferredoxin] + 2 S-adenosyl-L-methionine = 2-methyladenosine(2503) in 23S rRNA + 5'-deoxyadenosine + L-methionine + 2 oxidized [2Fe-2S]-[ferredoxin] + S-adenosyl-L-homocysteine. The enzyme catalyses adenosine(37) in tRNA + 2 reduced [2Fe-2S]-[ferredoxin] + 2 S-adenosyl-L-methionine = 2-methyladenosine(37) in tRNA + 5'-deoxyadenosine + L-methionine + 2 oxidized [2Fe-2S]-[ferredoxin] + S-adenosyl-L-homocysteine. In terms of biological role, specifically methylates position 2 of adenine 2503 in 23S rRNA and position 2 of adenine 37 in tRNAs. m2A2503 modification seems to play a crucial role in the proofreading step occurring at the peptidyl transferase center and thus would serve to optimize ribosomal fidelity. The polypeptide is Dual-specificity RNA methyltransferase RlmN (Escherichia coli O157:H7).